Reading from the N-terminus, the 357-residue chain is Ubiquitin carboxyl-terminal hydrolase 2 (357 aa).

The USP domain occupies 19–351 (TGLRNLGNTC…DAYLLFYELA (333 aa)). The Nucleophile role is filled by cysteine 28. 4 residues coordinate Zn(2+): cysteine 177, cysteine 180, cysteine 228, and cysteine 231. Histidine 309 acts as the Proton acceptor in catalysis.

It belongs to the peptidase C19 family. USP2 subfamily. In terms of assembly, homooligomer.

The protein resides in the cytoplasm. The protein localises to the perinuclear region. It catalyses the reaction Thiol-dependent hydrolysis of ester, thioester, amide, peptide and isopeptide bonds formed by the C-terminal Gly of ubiquitin (a 76-residue protein attached to proteins as an intracellular targeting signal).. Hydrolase that deubiquitinates polyubiquitinated target proteins such as MDM2, MDM4 and CCND1. Possesses both ubiquitin-specific peptidase and isopeptidase activities. May play a role in the regulation of the circadian clock. The chain is Ubiquitin carboxyl-terminal hydrolase 2 (USP2) from Gallus gallus (Chicken).